Consider the following 148-residue polypeptide: Single-stranded DNA-binding protein, mitochondrial (148 aa).

The N-terminal 16 residues, 1-16 (MFRRPVLQVLRQFVRH), are a transit peptide targeting the mitochondrion. The 112-residue stretch at 30-141 (LNRVHLLGRV…IIADNIIFLS (112 aa)) folds into the SSB domain. Serine 67 and serine 79 each carry phosphoserine. An N6-acetyllysine modification is found at lysine 113. Lysine 122 is subject to N6-succinyllysine.

In terms of assembly, homotetramer. Interacts with MPG/AAG, through inhibition of its glycosylase activity it potentially prevents formation of DNA breaks in ssDNA, ensuring that base removal primarily occurs in dsDNA. Interacts with POLDIP2. Interacts with PRIMPOL.

It is found in the mitochondrion. Its subcellular location is the mitochondrion matrix. The protein localises to the mitochondrion nucleoid. Its function is as follows. Binds preferentially and cooperatively to pyrimidine rich single-stranded DNA (ss-DNA). In vitro, required to maintain the copy number of mitochondrial DNA (mtDNA) and plays a crucial role during mtDNA replication by stimulating the activity of the replisome components POLG and TWNK at the replication fork. Promotes the activity of the gamma complex polymerase POLG, largely by organizing the template DNA and eliminating secondary structures to favor ss-DNA conformations that facilitate POLG activity. In addition it is able to promote the 5'-3' unwinding activity of the mtDNA helicase TWNK. May also function in mtDNA repair. The sequence is that of Single-stranded DNA-binding protein, mitochondrial (SSBP1) from Pongo abelii (Sumatran orangutan).